Reading from the N-terminus, the 115-residue chain is Large ribosomal subunit protein bL20 (115 aa).

This sequence belongs to the bacterial ribosomal protein bL20 family.

Binds directly to 23S ribosomal RNA and is necessary for the in vitro assembly process of the 50S ribosomal subunit. It is not involved in the protein synthesizing functions of that subunit. This is Large ribosomal subunit protein bL20 from Chlorobium luteolum (strain DSM 273 / BCRC 81028 / 2530) (Pelodictyon luteolum).